A 625-amino-acid chain; its full sequence is Alpha-protein kinase vwkA (625 aa).

Residues 1–15 (MESKYVLSTEKESKT) are compositionally biased toward basic and acidic residues. Residues 1–64 (MESKYVLSTE…GLSSGGSKTH (64 aa)) form a disordered region. Composition is skewed to polar residues over residues 25–39 (DMDS…TSLG) and 46–63 (SLKT…GSKT). Residues 87–114 (TKDSITLAKEKEKKIEKRNEEIKLTFKA) adopt a coiled-coil conformation. Residues 122 to 322 (DLLFIVDCTG…KMNERIFISI (201 aa)) form the VWFA domain. One can recognise an Alpha-type protein kinase domain in the interval 386 to 600 (TCLSSSYEMK…HCKKLGLTIP (215 aa)). 570-576 (GSCNLGK) contributes to the ATP binding site. The disordered stretch occupies residues 602–625 (FTSSSSTSSSSRSTSSSSSISYSY).

It belongs to the protein kinase superfamily. Alpha-type protein kinase family. ALPK subfamily. In terms of assembly, interacts with calmodulin; in the presence of calcium. In terms of processing, autophosphorylated, in vitro.

Its subcellular location is the cytoplasm. The protein resides in the cytosol. The protein localises to the perinuclear region. It is found in the contractile vacuole membrane. It catalyses the reaction L-seryl-[protein] + ATP = O-phospho-L-seryl-[protein] + ADP + H(+). The catalysed reaction is L-threonyl-[protein] + ATP = O-phospho-L-threonyl-[protein] + ADP + H(+). Its activity is regulated as follows. Autophosphorylation activity enhanced by calcium/calmodulin. In terms of biological role, displays a modest preference for threonine over serine residues. Does not phosphorylate myosin II, however can phosphorylate MBP, in vitro. May be involved in the regulation of myosin II function during cytokinesis. Overexpression leads to impaired cell proliferation in suspension culture and fails to develop beyond the mound stage. Both overexpression and absence of the gene can result in defects in cytokinesis and alterations in myosin II abundance and assembly. The sequence is that of Alpha-protein kinase vwkA (vwkA) from Dictyostelium discoideum (Social amoeba).